The chain runs to 411 residues: Acetate kinase (411 aa).

Residue asparagine 7 coordinates Mg(2+). Lysine 14 contacts ATP. A substrate-binding site is contributed by arginine 94. Aspartate 151 acts as the Proton donor/acceptor in catalysis. ATP-binding positions include 211-215 (HLGNG), 285-287 (DMR), and 333-337 (GIGEN). Residue glutamate 387 coordinates Mg(2+).

It belongs to the acetokinase family. As to quaternary structure, homodimer. The cofactor is Mg(2+). It depends on Mn(2+) as a cofactor.

It is found in the cytoplasm. It carries out the reaction acetate + ATP = acetyl phosphate + ADP. Its pathway is metabolic intermediate biosynthesis; acetyl-CoA biosynthesis; acetyl-CoA from acetate: step 1/2. In terms of biological role, catalyzes the formation of acetyl phosphate from acetate and ATP. Can also catalyze the reverse reaction. This is Acetate kinase from Syntrophobacter fumaroxidans (strain DSM 10017 / MPOB).